The sequence spans 167 residues: SAR-endolysin (167 aa).

The helical; Signal-anchor for type II membrane protein transmembrane segment at 11–31 threads the bilayer; it reads VIAAISGGAIAIASVLITGPG. Active-site proton donor/acceptor residues include Glu37 and Asp46.

Belongs to the glycosyl hydrolase 24 family.

It is found in the host cell inner membrane. The catalysed reaction is Hydrolysis of (1-&gt;4)-beta-linkages between N-acetylmuramic acid and N-acetyl-D-glucosamine residues in a peptidoglycan and between N-acetyl-D-glucosamine residues in chitodextrins.. Signal-arrest-release (SAR) endolysin with lysozyme activity that degrades host peptidoglycans and participates with the pinholin and spanin proteins in the sequential events which lead to programmed host cell lysis releasing the mature viral particles. Once the pinholin has permeabilized the host cell membrane, the SAR-endolysin is released into the periplasm where it breaks down the peptidoglycan layer. This Bacteriophage PS34 protein is SAR-endolysin (19).